A 450-amino-acid chain; its full sequence is Tubulin alpha chain (450 aa).

Q11 serves as a coordination point for GTP. K40 is subject to N6-acetyllysine. E71, S140, G144, T145, T179, N206, and N228 together coordinate GTP. E71 is a binding site for Mg(2+). E254 is a catalytic residue.

The protein belongs to the tubulin family. As to quaternary structure, dimer of alpha and beta chains. A typical microtubule is a hollow water-filled tube with an outer diameter of 25 nm and an inner diameter of 15 nM. Alpha-beta heterodimers associate head-to-tail to form protofilaments running lengthwise along the microtubule wall with the beta-tubulin subunit facing the microtubule plus end conferring a structural polarity. Microtubules usually have 13 protofilaments but different protofilament numbers can be found in some organisms and specialized cells. Mg(2+) is required as a cofactor. Undergoes a tyrosination/detyrosination cycle, the cyclic removal and re-addition of a C-terminal tyrosine residue by the enzymes tubulin tyrosine carboxypeptidase (TTCP) and tubulin tyrosine ligase (TTL), respectively. In terms of processing, acetylation of alpha chains at Lys-40 stabilizes microtubules and affects affinity and processivity of microtubule motors. This modification has a role in multiple cellular functions, ranging from cell motility, cell cycle progression or cell differentiation to intracellular trafficking and signaling.

The protein localises to the cytoplasm. It localises to the cytoskeleton. The catalysed reaction is GTP + H2O = GDP + phosphate + H(+). In terms of biological role, tubulin is the major constituent of microtubules, a cylinder consisting of laterally associated linear protofilaments composed of alpha- and beta-tubulin heterodimers. Microtubules grow by the addition of GTP-tubulin dimers to the microtubule end, where a stabilizing cap forms. Below the cap, tubulin dimers are in GDP-bound state, owing to GTPase activity of alpha-tubulin. This chain is Tubulin alpha chain, found in Haemonchus contortus (Barber pole worm).